Consider the following 215-residue polypeptide: 3-demethoxyubiquinol 3-hydroxylase (215 aa).

Fe cation contacts are provided by Glu64, Glu94, His97, Glu146, Glu178, and His181.

It belongs to the COQ7 family. Fe cation is required as a cofactor.

It is found in the cell membrane. The enzyme catalyses a 5-methoxy-2-methyl-3-(all-trans-polyprenyl)benzene-1,4-diol + AH2 + O2 = a 3-demethylubiquinol + A + H2O. Its pathway is cofactor biosynthesis; ubiquinone biosynthesis. Its function is as follows. Catalyzes the hydroxylation of 2-nonaprenyl-3-methyl-6-methoxy-1,4-benzoquinol during ubiquinone biosynthesis. This is 3-demethoxyubiquinol 3-hydroxylase from Pseudomonas fluorescens (strain Pf0-1).